We begin with the raw amino-acid sequence, 104 residues long: Large ribosomal subunit protein bL21c (104 aa).

The protein belongs to the bacterial ribosomal protein bL21 family. As to quaternary structure, part of the 50S ribosomal subunit.

The protein resides in the plastid. Its subcellular location is the cyanelle. In terms of biological role, this protein binds to 23S rRNA. This chain is Large ribosomal subunit protein bL21c, found in Cyanophora paradoxa.